The primary structure comprises 257 residues: MNKQRFLFAAKISGIHFLLSLTVAALLAGLIFFVWYPFPYQKIMGSFKLFFLIFGIDVCCGPLLTFILSNPQKRLKECIIDFSLIIFIQLSAFIYGMYNIYLARPVAVVFELDRIRVLSKGDILLDELPQALPEFRQFPYFGHHLLAVRDWKNAEERKEGVEKAFQGFDIAQQPTLWVAYSSELEKIRKAAKPLAQSFLKLNAKQQQDVKTALQKAHLNLEEAFFLPLVSNRSMEWMVILDKNMNITTAVEIDAFEL.

This Dichelobacter nodosus (Bacteroides nodosus) protein is Fimbrial assembly protein, serogroup I (fimB).